Consider the following 483-residue polypeptide: Arginine/agmatine antiporter (483 aa).

12 consecutive transmembrane segments (helical) span residues 11-31, 41-61, 85-105, 124-144, 157-177, 208-228, 239-259, 289-309, 336-356, 364-384, 415-435, and 458-478; these read ILGTLALTGIVISSMIGGGIF, ASAGAVMLAWMLSGIGIFFIA, GFGPYVGFTIAWGYWLCQIFG, YFAGGNTIPAILLGSLLIWIF, FVNIIGAVCTLIPLLLFILIT, STMLVTLWAFIGIEGAVVISG, ATILGFSGCLLIYVLLSLLPF, VLMNTGLLIAVLTSWLSWTIL, PSFSLFMTSGLMQITMLLVYF, MLEITGVMVLPAYLTSSLFLV, LWLIYAGGLQHLFMVAILLAL, and EILKMTIVALAALLAIFLFSA.

Belongs to the amino acid-polyamine-organocation (APC) superfamily. Basic amino acid/polyamine antiporter (APA) (TC 2.A.3.2) family.

It is found in the cell inner membrane. In terms of biological role, catalyzes the exchange of L-arginine for agmatine. The arginine uptake by the bacterium in the macrophage may be a virulence factor against the host innate immune response. In Chlamydia trachomatis serovar A (strain ATCC VR-571B / DSM 19440 / HAR-13), this protein is Arginine/agmatine antiporter (aaxC).